The chain runs to 121 residues: Snaclec coagulation factor IX-binding protein subunit A (121 aa).

In terms of domain architecture, C-type lectin spans 1–120 (YEGHCYQTFK…CGERNPFVCE (120 aa)). Intrachain disulfides connect cysteine 22/cysteine 119 and cysteine 94/cysteine 111. Ca(2+)-binding residues include serine 33, glutamate 35, and glutamate 39. A Ca(2+)-binding site is contributed by glutamate 120.

It belongs to the snaclec family. Heterodimer of subunits A and B; disulfide-linked. Expressed by the venom gland.

Its subcellular location is the secreted. Anticoagulant protein which binds to the gamma-carboxyglutamic acid-domain regions of factor IX (F9) (but not factor X) in the presence of calcium with a 1 to 1 stoichiometry. This is Snaclec coagulation factor IX-binding protein subunit A from Gloydius halys (Chinese water mocassin).